We begin with the raw amino-acid sequence, 322 residues long: Undecaprenyl-phosphate 4-deoxy-4-formamido-L-arabinose transferase (322 aa).

Residues 1–235 lie on the Cytoplasmic side of the membrane; the sequence is MFEIHPVKKV…TCLTTTPLRM (235 aa). The chain crosses the membrane as a helical span at residues 236–256; the sequence is LSLLGSIIAIGGFSIAVLLVI. Residues 257–269 lie on the Periplasmic side of the membrane; sequence LRLTFGPQWAAEG. Residues 270-290 form a helical membrane-spanning segment; that stretch reads VFMLFAVLFTFIGAQFIGMGL. The Cytoplasmic portion of the chain corresponds to 291–322; sequence LGEYIGRIYTDVRARPRYFVQQVIRPSSKENE.

This sequence belongs to the glycosyltransferase 2 family.

It is found in the cell inner membrane. It catalyses the reaction UDP-4-deoxy-4-formamido-beta-L-arabinose + di-trans,octa-cis-undecaprenyl phosphate = 4-deoxy-4-formamido-alpha-L-arabinopyranosyl di-trans,octa-cis-undecaprenyl phosphate + UDP. It participates in glycolipid biosynthesis; 4-amino-4-deoxy-alpha-L-arabinose undecaprenyl phosphate biosynthesis; 4-amino-4-deoxy-alpha-L-arabinose undecaprenyl phosphate from UDP-4-deoxy-4-formamido-beta-L-arabinose and undecaprenyl phosphate: step 1/2. It functions in the pathway bacterial outer membrane biogenesis; lipopolysaccharide biosynthesis. Its function is as follows. Catalyzes the transfer of 4-deoxy-4-formamido-L-arabinose from UDP to undecaprenyl phosphate. The modified arabinose is attached to lipid A and is required for resistance to polymyxin and cationic antimicrobial peptides. The sequence is that of Undecaprenyl-phosphate 4-deoxy-4-formamido-L-arabinose transferase from Shigella dysenteriae serotype 1 (strain Sd197).